We begin with the raw amino-acid sequence, 965 residues long: Probable ion channel POLLUX (965 aa).

The segment covering 1 to 11 has biased composition (low complexity); the sequence is MAESDGGEASP. 2 disordered regions span residues 1–76 and 108–158; these read MAES…APRG and GPHA…KSLA. Polar residues predominate over residues 32–42; that stretch reads LTKSRTISGSA. Composition is skewed to low complexity over residues 52–66 and 118–149; these read SNSS…SSTA and RSQQ…ASVS. The next 4 membrane-spanning stretches (helical) occupy residues 187 to 207, 251 to 271, 317 to 337, and 369 to 389; these read LSPY…LAIW, ADWN…VFLV, LALL…LYVV, and IVSV…LGLV. 2 RCK N-terminal domains span residues 410 to 551 and 670 to 818; these read VNHI…ETVV and PEKI…DKSI.

This sequence belongs to the castor/pollux (TC 1.A.1.23) family. In terms of tissue distribution, expressed in roots, leaves, stems and panicles.

The protein localises to the nucleus membrane. Functionally, required for mycorrhizal symbiosis. The polypeptide is Probable ion channel POLLUX (Oryza sativa subsp. japonica (Rice)).